A 307-amino-acid polypeptide reads, in one-letter code: Ornithine carbamoyltransferase (307 aa).

Residues Ser51–Thr54, Gln78, Arg102, and His129–Gln132 contribute to the carbamoyl phosphate site. Residues Asn160, Asp220, and Ser224 to Met225 contribute to the L-ornithine site. Residues Cys260–Leu261 and Arg288 each bind carbamoyl phosphate.

Belongs to the aspartate/ornithine carbamoyltransferase superfamily. OTCase family.

Its subcellular location is the cytoplasm. The catalysed reaction is carbamoyl phosphate + L-ornithine = L-citrulline + phosphate + H(+). It participates in amino-acid biosynthesis; L-arginine biosynthesis; L-arginine from L-ornithine and carbamoyl phosphate: step 1/3. In terms of biological role, reversibly catalyzes the transfer of the carbamoyl group from carbamoyl phosphate (CP) to the N(epsilon) atom of ornithine (ORN) to produce L-citrulline. The protein is Ornithine carbamoyltransferase (argF) of Archaeoglobus fulgidus (strain ATCC 49558 / DSM 4304 / JCM 9628 / NBRC 100126 / VC-16).